A 148-amino-acid polypeptide reads, in one-letter code: Ribonuclease H (148 aa).

One can recognise an RNase H type-1 domain in the interval 1–142 (MSDSVEMFTD…ADQLANRGVD (142 aa)). Residues D10, E48, D70, and D134 each contribute to the Mg(2+) site.

The protein belongs to the RNase H family. Monomer. It depends on Mg(2+) as a cofactor.

The protein localises to the cytoplasm. The enzyme catalyses Endonucleolytic cleavage to 5'-phosphomonoester.. Endonuclease that specifically degrades the RNA of RNA-DNA hybrids. The polypeptide is Ribonuclease H (Pseudomonas putida (strain ATCC 700007 / DSM 6899 / JCM 31910 / BCRC 17059 / LMG 24140 / F1)).